The primary structure comprises 193 residues: Probable nicotinate-nucleotide adenylyltransferase (193 aa).

It belongs to the NadD family.

The catalysed reaction is nicotinate beta-D-ribonucleotide + ATP + H(+) = deamido-NAD(+) + diphosphate. It functions in the pathway cofactor biosynthesis; NAD(+) biosynthesis; deamido-NAD(+) from nicotinate D-ribonucleotide: step 1/1. In terms of biological role, catalyzes the reversible adenylation of nicotinate mononucleotide (NaMN) to nicotinic acid adenine dinucleotide (NaAD). This is Probable nicotinate-nucleotide adenylyltransferase from Flavobacterium psychrophilum (strain ATCC 49511 / DSM 21280 / CIP 103535 / JIP02/86).